Reading from the N-terminus, the 115-residue chain is Tyrosine-protein phosphatase 23 (115 aa).

In terms of domain architecture, Tyrosine-protein phosphatase spans 1 to 115 (WMMIVEQKCR…EIGGDAPMVV (115 aa)). Residue Asp-83 coordinates substrate.

It belongs to the protein-tyrosine phosphatase family.

It catalyses the reaction O-phospho-L-tyrosyl-[protein] + H2O = L-tyrosyl-[protein] + phosphate. This is Tyrosine-protein phosphatase 23 (STY-23) from Styela plicata (Wrinkled sea squirt).